Reading from the N-terminus, the 253-residue chain is Phosphoribosylaminoimidazole-succinocarboxamide synthase (253 aa).

This sequence belongs to the SAICAR synthetase family.

It catalyses the reaction 5-amino-1-(5-phospho-D-ribosyl)imidazole-4-carboxylate + L-aspartate + ATP = (2S)-2-[5-amino-1-(5-phospho-beta-D-ribosyl)imidazole-4-carboxamido]succinate + ADP + phosphate + 2 H(+). It functions in the pathway purine metabolism; IMP biosynthesis via de novo pathway; 5-amino-1-(5-phospho-D-ribosyl)imidazole-4-carboxamide from 5-amino-1-(5-phospho-D-ribosyl)imidazole-4-carboxylate: step 1/2. In Roseobacter denitrificans (strain ATCC 33942 / OCh 114) (Erythrobacter sp. (strain OCh 114)), this protein is Phosphoribosylaminoimidazole-succinocarboxamide synthase.